A 315-amino-acid chain; its full sequence is Transaldolase (315 aa).

Lys-125 functions as the Schiff-base intermediate with substrate in the catalytic mechanism.

Belongs to the transaldolase family. Type 1 subfamily. In terms of assembly, homodimer.

The protein localises to the cytoplasm. The enzyme catalyses D-sedoheptulose 7-phosphate + D-glyceraldehyde 3-phosphate = D-erythrose 4-phosphate + beta-D-fructose 6-phosphate. The protein operates within carbohydrate degradation; pentose phosphate pathway; D-glyceraldehyde 3-phosphate and beta-D-fructose 6-phosphate from D-ribose 5-phosphate and D-xylulose 5-phosphate (non-oxidative stage): step 2/3. Functionally, transaldolase is important for the balance of metabolites in the pentose-phosphate pathway. This is Transaldolase from Polaromonas sp. (strain JS666 / ATCC BAA-500).